Consider the following 510-residue polypeptide: Cytochrome P450 94B1 (510 aa).

A helical membrane pass occupies residues 3–23 (MLNAIILILFPIIGFVLIFSF). Cysteine 450 is a heme binding site.

Belongs to the cytochrome P450 family. Requires heme as cofactor.

Its subcellular location is the membrane. It carries out the reaction a jasmonyl-L-amino acid + reduced [NADPH--hemoprotein reductase] + O2 = a 12-hydroxyjasmonyl-L-alpha-amino acid + oxidized [NADPH--hemoprotein reductase] + H2O + H(+). Its function is as follows. Hydroxylase involved in the oxidation of the plant hormone jasmonoyl-L-isoleucine (JA-Ile), a bioactive phytohormone of the jasmonate-mediated signaling pathway. Converts JA-Ile to 12-hydroxy-JA-Ile. This Arabidopsis thaliana (Mouse-ear cress) protein is Cytochrome P450 94B1.